A 73-amino-acid chain; its full sequence is Sec-independent protein translocase protein TatA (73 aa).

A helical membrane pass occupies residues Met-1–Gly-21.

Belongs to the TatA/E family. The Tat system comprises two distinct complexes: a TatABC complex, containing multiple copies of TatA, TatB and TatC subunits, and a separate TatA complex, containing only TatA subunits. Substrates initially bind to the TatABC complex, which probably triggers association of the separate TatA complex to form the active translocon.

Its subcellular location is the cell inner membrane. Its function is as follows. Part of the twin-arginine translocation (Tat) system that transports large folded proteins containing a characteristic twin-arginine motif in their signal peptide across membranes. TatA could form the protein-conducting channel of the Tat system. This chain is Sec-independent protein translocase protein TatA, found in Mesorhizobium japonicum (strain LMG 29417 / CECT 9101 / MAFF 303099) (Mesorhizobium loti (strain MAFF 303099)).